The chain runs to 704 residues: Histone-lysine N-methyltransferase, H3 lysine-9 specific SUVH1 (704 aa).

2 disordered regions span residues 1 to 21 (MEQG…TRVL) and 68 to 176 (PFVA…QAEG). 2 stretches are compositionally biased toward polar residues: residues 80-90 (ESSQQTPSGVP) and 109-121 (SFRT…GNSG). Residues 159–170 (GKKRGRPKKPRR) show a composition bias toward basic residues. The YDG domain maps to 265 to 412 (GNAPGIEVGD…CNVFKYKLLR (148 aa)). One can recognise a Pre-SET domain in the interval 487–548 (PSCHCVGGCQ…NCRNRMSQGG (62 aa)). Zn(2+) is bound by residues cysteine 489, cysteine 491, cysteine 495, cysteine 502, cysteine 504, cysteine 530, cysteine 534, cysteine 536, and cysteine 540. In terms of domain architecture, SET spans 551–681 (ARLEVFKTKN…PMQELTFDYG (131 aa)). Residues 561–563 (RGW), aspartate 593, tyrosine 595, arginine 635, and 638–639 (NH) each bind S-adenosyl-L-methionine. 4 residues coordinate Zn(2+): cysteine 641, cysteine 692, cysteine 694, and cysteine 699. The region spanning 688–704 (RRKKCLCGSLNCRGYFY) is the Post-SET domain.

Belongs to the class V-like SAM-binding methyltransferase superfamily. Histone-lysine methyltransferase family. Suvar3-9 subfamily. In terms of assembly, interacts with LHP1. In terms of tissue distribution, expressed in roots, stems, leaves and flowers.

It localises to the nucleus. Its subcellular location is the chromosome. The enzyme catalyses N(6)-methyl-L-lysyl(27)-[histone H3] + S-adenosyl-L-methionine = N(6),N(6)-dimethyl-L-lysyl(27)-[histone H3] + S-adenosyl-L-homocysteine + H(+). It carries out the reaction L-lysyl(9)-[histone H3] + 2 S-adenosyl-L-methionine = N(6),N(6)-dimethyl-L-lysyl(9)-[histone H3] + 2 S-adenosyl-L-homocysteine + 2 H(+). The catalysed reaction is L-lysyl(27)-[histone H3] + S-adenosyl-L-methionine = N(6)-methyl-L-lysyl(27)-[histone H3] + S-adenosyl-L-homocysteine + H(+). Histone methyltransferase. Methylates in vitro both 'Lys-9' and 'Lys-27' of histone H3. Required for in vivo dimethylation of 'Lys-9'. H3 'Lys-9' methylation represents a specific tag for epigenetic control for plant development and transcriptional repression. This is Histone-lysine N-methyltransferase, H3 lysine-9 specific SUVH1 (SUVH1) from Nicotiana tabacum (Common tobacco).